A 140-amino-acid polypeptide reads, in one-letter code: Putative nickel-responsive regulator 2 (140 aa).

His81, His92, His94, and Cys100 together coordinate Ni(2+).

Belongs to the transcriptional regulatory CopG/NikR family. Ni(2+) serves as cofactor.

Its function is as follows. Transcriptional regulator. The chain is Putative nickel-responsive regulator 2 from Methanosarcina mazei (strain ATCC BAA-159 / DSM 3647 / Goe1 / Go1 / JCM 11833 / OCM 88) (Methanosarcina frisia).